Consider the following 208-residue polypeptide: Small ribosomal subunit protein uS4A (208 aa).

Residues 98–164 enclose the S4 RNA-binding domain; the sequence is TRLDNVVYTL…AKIQSAIQAV (67 aa).

This sequence belongs to the universal ribosomal protein uS4 family. In terms of assembly, part of the 30S ribosomal subunit. Contacts protein S5. The interaction surface between S4 and S5 is involved in control of translational fidelity.

One of the primary rRNA binding proteins, it binds directly to 16S rRNA where it nucleates assembly of the body of the 30S subunit. Its function is as follows. With S5 and S12 plays an important role in translational accuracy. In Bdellovibrio bacteriovorus (strain ATCC 15356 / DSM 50701 / NCIMB 9529 / HD100), this protein is Small ribosomal subunit protein uS4A.